The chain runs to 283 residues: Release factor glutamine methyltransferase (283 aa).

Residues glycine 121 to glycine 125, aspartate 144, and asparagine 188 contribute to the S-adenosyl-L-methionine site. Asparagine 188–tyrosine 191 provides a ligand contact to substrate.

Belongs to the protein N5-glutamine methyltransferase family. PrmC subfamily.

The catalysed reaction is L-glutaminyl-[peptide chain release factor] + S-adenosyl-L-methionine = N(5)-methyl-L-glutaminyl-[peptide chain release factor] + S-adenosyl-L-homocysteine + H(+). Functionally, methylates the class 1 translation termination release factors RF1/PrfA and RF2/PrfB on the glutamine residue of the universally conserved GGQ motif. The sequence is that of Release factor glutamine methyltransferase from Bacillus cereus (strain ATCC 14579 / DSM 31 / CCUG 7414 / JCM 2152 / NBRC 15305 / NCIMB 9373 / NCTC 2599 / NRRL B-3711).